The chain runs to 197 residues: FMN-dependent NADH:quinone oxidoreductase 1 (197 aa).

FMN is bound by residues Ser10, 16–18 (SQS), 93–96 (MYNF), and 137–140 (TRGG).

It belongs to the azoreductase type 1 family. In terms of assembly, homodimer. The cofactor is FMN.

It catalyses the reaction 2 a quinone + NADH + H(+) = 2 a 1,4-benzosemiquinone + NAD(+). The catalysed reaction is N,N-dimethyl-1,4-phenylenediamine + anthranilate + 2 NAD(+) = 2-(4-dimethylaminophenyl)diazenylbenzoate + 2 NADH + 2 H(+). In terms of biological role, quinone reductase that provides resistance to thiol-specific stress caused by electrophilic quinones. Its function is as follows. Also exhibits azoreductase activity. Catalyzes the reductive cleavage of the azo bond in aromatic azo compounds to the corresponding amines. In Photobacterium profundum (strain SS9), this protein is FMN-dependent NADH:quinone oxidoreductase 1.